Consider the following 428-residue polypeptide: Elongation factor 1-alpha (428 aa).

Positions 5–217 constitute a tr-type G domain; sequence KPHVNIVFIG…DQIPEPEKPV (213 aa). Positions 14-21 are G1; sequence GHVDHGKS. 14–21 is a binding site for GTP; sequence GHVDHGKS. Position 21 (S21) interacts with Mg(2+). The segment at 68-72 is G2; that stretch reads GITID. Residues 89 to 92 form a G3 region; it reads DAPG. GTP-binding positions include 89-93 and 144-147; these read DAPGH and NKMD. Residues 144–147 are G4; that stretch reads NKMD. The G5 stretch occupies residues 181-183; it reads SAW.

It belongs to the TRAFAC class translation factor GTPase superfamily. Classic translation factor GTPase family. EF-Tu/EF-1A subfamily.

The protein resides in the cytoplasm. It catalyses the reaction GTP + H2O = GDP + phosphate + H(+). Its function is as follows. GTP hydrolase that promotes the GTP-dependent binding of aminoacyl-tRNA to the A-site of ribosomes during protein biosynthesis. The polypeptide is Elongation factor 1-alpha (Pyrococcus furiosus (strain ATCC 43587 / DSM 3638 / JCM 8422 / Vc1)).